Here is a 338-residue protein sequence, read N- to C-terminus: MKIYYDKDCNMGVLKGKKVAIIGYGSQGHAHANNLKDSGIDVVVGLRADSASVKKATEAGLTVLPTSEAVKIADVVMILLPDETQGDIYREEIGPFLKQGAYLAFSHGFNIHFGQIVPRPDVNVIMIAPKGPGHLVRHEYTKGGGVPSLIAIHHDPAGNSRDVALAYASANGGGRAGIIETSFKEETETDLFGEQAVLCGGISALIQAGFETLVEAGYAPEMAYFECLHETKLIVDLIYEGGIANMRYSISNTAEYGDLTRGPRVVTDETKKEMKRILDEIQTGQFAKEWMLENKANKPVFTALRRKGAEHQIEEVGARLRSMMSWIGASKIVDKAKN.

In terms of domain architecture, KARI N-terminal Rossmann spans 1-181 (MKIYYDKDCN…GGGRAGIIET (181 aa)). NADP(+)-binding positions include 24 to 27 (YGSQ), Arg47, Ser50, Ser52, and 82 to 85 (DETQ). Residue His107 is part of the active site. Gly133 is a binding site for NADP(+). Residues 182–327 (SFKEETETDL…ARLRSMMSWI (146 aa)) enclose the KARI C-terminal knotted domain. Mg(2+) contacts are provided by Asp190, Glu194, Glu226, and Glu230. Ser251 lines the substrate pocket.

It belongs to the ketol-acid reductoisomerase family. The cofactor is Mg(2+).

The enzyme catalyses (2R)-2,3-dihydroxy-3-methylbutanoate + NADP(+) = (2S)-2-acetolactate + NADPH + H(+). It carries out the reaction (2R,3R)-2,3-dihydroxy-3-methylpentanoate + NADP(+) = (S)-2-ethyl-2-hydroxy-3-oxobutanoate + NADPH + H(+). It functions in the pathway amino-acid biosynthesis; L-isoleucine biosynthesis; L-isoleucine from 2-oxobutanoate: step 2/4. The protein operates within amino-acid biosynthesis; L-valine biosynthesis; L-valine from pyruvate: step 2/4. Its function is as follows. Involved in the biosynthesis of branched-chain amino acids (BCAA). Catalyzes an alkyl-migration followed by a ketol-acid reduction of (S)-2-acetolactate (S2AL) to yield (R)-2,3-dihydroxy-isovalerate. In the isomerase reaction, S2AL is rearranged via a Mg-dependent methyl migration to produce 3-hydroxy-3-methyl-2-ketobutyrate (HMKB). In the reductase reaction, this 2-ketoacid undergoes a metal-dependent reduction by NADPH to yield (R)-2,3-dihydroxy-isovalerate. The sequence is that of Ketol-acid reductoisomerase (NADP(+)) from Geobacter metallireducens (strain ATCC 53774 / DSM 7210 / GS-15).